Consider the following 545-residue polypeptide: Hydroxylamine reductase (545 aa).

Residues C7, C10, C19, and C25 each coordinate [4Fe-4S] cluster. Hybrid [4Fe-2O-2S] cluster-binding residues include H241, E265, C309, C400, C428, C453, E488, and K490. Position 400 is a cysteine persulfide; in oxidized form (C400).

Belongs to the HCP family. As to quaternary structure, monomer. [4Fe-4S] cluster is required as a cofactor. Requires hybrid [4Fe-2O-2S] cluster as cofactor.

Its subcellular location is the cytoplasm. The enzyme catalyses A + NH4(+) + H2O = hydroxylamine + AH2 + H(+). Functionally, catalyzes the reduction of hydroxylamine to form NH(3) and H(2)O. This is Hydroxylamine reductase from Desulfovibrio desulfuricans (strain ATCC 27774 / DSM 6949 / MB).